The following is a 96-amino-acid chain: Protein Vpr (96 aa).

The tract at residues methionine 1–leucine 42 is homooligomerization. 3 positions are modified to phosphoserine; by host: serine 79, serine 94, and serine 96.

This sequence belongs to the HIV-1 VPR protein family. In terms of assembly, homooligomer, may form homodimer. Interacts with p6-gag region of the Pr55 Gag precursor protein through a (Leu-X-X)4 motif near the C-terminus of the P6gag protein. Interacts with host UNG. May interact with host RAD23A/HHR23A. Interacts with host VPRBP/DCAF1, leading to hijack the CUL4A-RBX1-DDB1-DCAF1/VPRBP complex, mediating ubiquitination of host proteins such as TERT and ZGPAT and arrest of the cell cycle in G2 phase. Post-translationally, phosphorylated on several residues by host. These phosphorylations regulate VPR activity for the nuclear import of the HIV-1 pre-integration complex.

The protein localises to the virion. Its subcellular location is the host nucleus. The protein resides in the host extracellular space. In terms of biological role, during virus replication, may deplete host UNG protein, and incude G2-M cell cycle arrest. Acts by targeting specific host proteins for degradation by the 26S proteasome, through association with the cellular CUL4A-DDB1 E3 ligase complex by direct interaction with host VPRPB/DCAF-1. Cell cycle arrest reportedly occurs within hours of infection and is not blocked by antiviral agents, suggesting that it is initiated by the VPR carried into the virion. Additionally, VPR induces apoptosis in a cell cycle dependent manner suggesting that these two effects are mechanistically linked. Detected in the serum and cerebrospinal fluid of AIDS patient, VPR may also induce cell death to bystander cells. Functionally, during virus entry, plays a role in the transport of the viral pre-integration (PIC) complex to the host nucleus. This function is crucial for viral infection of non-dividing macrophages. May act directly at the nuclear pore complex, by binding nucleoporins phenylalanine-glycine (FG)-repeat regions. This chain is Protein Vpr, found in Human immunodeficiency virus type 1 group M subtype B (strain 89.6) (HIV-1).